Consider the following 87-residue polypeptide: Chaperone NapD (87 aa).

It belongs to the NapD family. As to quaternary structure, interacts with the cytoplasmic NapA precursor.

The protein resides in the cytoplasm. Its function is as follows. Chaperone for NapA, the catalytic subunit of the periplasmic nitrate reductase. It binds directly and specifically to the twin-arginine signal peptide of NapA, preventing premature interaction with the Tat translocase and premature export. This is Chaperone NapD from Escherichia coli O157:H7.